The following is a 251-amino-acid chain: MAIHADTHDDLRLFQTGEHACGYWSDRRARDLVLDPHDPRLGAIYPQALAWGFRRSGDLVYRPHCERCRACVPVRIAVDAFHPDRSQRRCLTRNQDLVVRVVAAERTDEQLALYRQYLKYRHPGGGMDEHGATEFDQFLIGGWSHGRFLEIREPAIAHLPGRLLAVAVTDVTEHALSAIYTFYAPEAAARSLGTFAILQQIQWAQRERRAHVYLGYWIEGHAKMNYKRRFSALEAYDGRHWCDLPAHPSGT.

Belongs to the R-transferase family. Bpt subfamily.

It is found in the cytoplasm. The enzyme catalyses N-terminal L-glutamyl-[protein] + L-leucyl-tRNA(Leu) = N-terminal L-leucyl-L-glutamyl-[protein] + tRNA(Leu) + H(+). The catalysed reaction is N-terminal L-aspartyl-[protein] + L-leucyl-tRNA(Leu) = N-terminal L-leucyl-L-aspartyl-[protein] + tRNA(Leu) + H(+). Its function is as follows. Functions in the N-end rule pathway of protein degradation where it conjugates Leu from its aminoacyl-tRNA to the N-termini of proteins containing an N-terminal aspartate or glutamate. This chain is Aspartate/glutamate leucyltransferase, found in Xanthomonas oryzae pv. oryzae (strain KACC10331 / KXO85).